A 201-amino-acid chain; its full sequence is LexA repressor (201 aa).

The H-T-H motif DNA-binding region spans 28–48 (RAEIAARLGFRSPNAAEEHLK). Residues Ser118 and Lys155 each act as for autocatalytic cleavage activity in the active site.

It belongs to the peptidase S24 family. As to quaternary structure, homodimer.

It carries out the reaction Hydrolysis of Ala-|-Gly bond in repressor LexA.. Functionally, represses a number of genes involved in the response to DNA damage (SOS response), including recA and lexA. In the presence of single-stranded DNA, RecA interacts with LexA causing an autocatalytic cleavage which disrupts the DNA-binding part of LexA, leading to derepression of the SOS regulon and eventually DNA repair. This chain is LexA repressor, found in Photorhabdus laumondii subsp. laumondii (strain DSM 15139 / CIP 105565 / TT01) (Photorhabdus luminescens subsp. laumondii).